The chain runs to 325 residues: Protein FAM50B (325 aa).

Residue A2 is modified to N-acetylalanine. Positions 137 to 160 (RRAGNLGKNPDVDTSFLPDRDREE) are disordered.

This sequence belongs to the FAM50 family.

This chain is Protein FAM50B (FAM50B), found in Macaca fascicularis (Crab-eating macaque).